The following is a 336-amino-acid chain: Flagellar filament 41 kDa core protein (336 aa).

Positions 208–236 are disordered; that stretch reads AAPVQEGVQQEGAQQPAPATAPSQGGVNS. Positions 210 to 233 are enriched in low complexity; sequence PVQEGVQQEGAQQPAPATAPSQGG.

Belongs to the bacterial flagellin family. In terms of assembly, the flagellum consists of an outer layer composed of repeating units of FlaA around a core that contains several antigenically related polypeptides.

The protein resides in the periplasmic flagellum. The protein localises to the periplasm. Its function is as follows. Component of the core of the flagella. The protein is Flagellar filament 41 kDa core protein (fla) of Borreliella burgdorferi (strain ATCC 35210 / DSM 4680 / CIP 102532 / B31) (Borrelia burgdorferi).